We begin with the raw amino-acid sequence, 131 residues long: Photosystem II reaction center Psb28 protein (131 aa).

A disordered region spans residues 110-131 (NGLGYSQNQKSDQTDAATEEQA). Positions 112–125 (LGYSQNQKSDQTDA) are enriched in polar residues.

It belongs to the Psb28 family. In terms of assembly, part of the photosystem II complex.

It is found in the cellular thylakoid membrane. This is Photosystem II reaction center Psb28 protein from Synechococcus sp. (strain CC9902).